A 71-amino-acid chain; its full sequence is Large ribosomal subunit protein bL31 (71 aa).

The Zn(2+) site is built by Cys16, Cys18, Cys37, and Cys40.

The protein belongs to the bacterial ribosomal protein bL31 family. Type A subfamily. As to quaternary structure, part of the 50S ribosomal subunit. Requires Zn(2+) as cofactor.

Its function is as follows. Binds the 23S rRNA. The protein is Large ribosomal subunit protein bL31 of Nitratidesulfovibrio vulgaris (strain DSM 19637 / Miyazaki F) (Desulfovibrio vulgaris).